Here is a 121-residue protein sequence, read N- to C-terminus: Large ribosomal subunit protein uL14c (121 aa).

It belongs to the universal ribosomal protein uL14 family. Part of the 50S ribosomal subunit.

The protein resides in the plastid. Its subcellular location is the chloroplast. Binds to 23S rRNA. This chain is Large ribosomal subunit protein uL14c, found in Guillardia theta (Cryptophyte).